The primary structure comprises 49 residues: SKMKKCEFAKIAKEQHMDGYHGVSLADWVCLVNNESDFNTKAINRNKGI.

In terms of domain architecture, C-type lysozyme spans S1 to I49. The active site involves E35.

It belongs to the glycosyl hydrolase 22 family. Monomer.

It localises to the secreted. It catalyses the reaction Hydrolysis of (1-&gt;4)-beta-linkages between N-acetylmuramic acid and N-acetyl-D-glucosamine residues in a peptidoglycan and between N-acetyl-D-glucosamine residues in chitodextrins.. In terms of biological role, lysozymes have primarily a bacteriolytic function; those in tissues and body fluids are associated with the monocyte-macrophage system and enhance the activity of immunoagents. The protein is Lysozyme C (LYZ) of Pseudocheirus peregrinus (Common ring-tailed possum).